Reading from the N-terminus, the 276-residue chain is Diaminopimelate epimerase (276 aa).

N13, Q46, and N66 together coordinate substrate. The Proton donor role is filled by C75. Substrate contacts are provided by residues 76-77 (GN), N159, N192, and 210-211 (ER). C219 functions as the Proton acceptor in the catalytic mechanism. A substrate-binding site is contributed by 220–221 (GS).

This sequence belongs to the diaminopimelate epimerase family. In terms of assembly, homodimer.

It localises to the cytoplasm. The catalysed reaction is (2S,6S)-2,6-diaminopimelate = meso-2,6-diaminopimelate. The protein operates within amino-acid biosynthesis; L-lysine biosynthesis via DAP pathway; DL-2,6-diaminopimelate from LL-2,6-diaminopimelate: step 1/1. Functionally, catalyzes the stereoinversion of LL-2,6-diaminopimelate (L,L-DAP) to meso-diaminopimelate (meso-DAP), a precursor of L-lysine and an essential component of the bacterial peptidoglycan. This Vibrio parahaemolyticus serotype O3:K6 (strain RIMD 2210633) protein is Diaminopimelate epimerase.